A 238-amino-acid chain; its full sequence is ATP synthase subunit a (238 aa).

Helical transmembrane passes span 18–38 (LTLL…VFWA), 76–96 (YSLL…LGLF), 114–134 (NLAF…IEGI), 166–186 (SLAI…GLIV), and 193–213 (LYWW…SIFI).

Belongs to the ATPase A chain family. In terms of assembly, F-type ATPases have 2 components, CF(1) - the catalytic core - and CF(0) - the membrane proton channel. CF(1) has five subunits: alpha(3), beta(3), gamma(1), delta(1), epsilon(1). CF(0) has three main subunits: a(1), b(2) and c(9-12). The alpha and beta chains form an alternating ring which encloses part of the gamma chain. CF(1) is attached to CF(0) by a central stalk formed by the gamma and epsilon chains, while a peripheral stalk is formed by the delta and b chains.

The protein localises to the cell membrane. Its function is as follows. Key component of the proton channel; it plays a direct role in the translocation of protons across the membrane. This Streptococcus equi subsp. zooepidemicus (strain H70) protein is ATP synthase subunit a.